We begin with the raw amino-acid sequence, 143 residues long: Crossover junction endodeoxyribonuclease Hjc (143 aa).

Residue Glu-12 participates in Mg(2+) binding. Ser-32 is an active-site residue. Asp-42 and Glu-55 together coordinate Mg(2+).

The protein belongs to the Holliday junction resolvase Hjc family. As to quaternary structure, homodimer. Interacts with PCNA subunit PCNA1. The cofactor is Mg(2+).

The catalysed reaction is Endonucleolytic cleavage at a junction such as a reciprocal single-stranded crossover between two homologous DNA duplexes (Holliday junction).. Its activity is regulated as follows. Autoinhibits at very high concentrations, possibly because of extreme junction distortion. Inhibition (and activity at low concentrations of enzyme) is stimulated by dsDNA and Sso7d. Activity stimulated by PCNA subunit PCNA1. A structure-specific endonuclease that resolves Holliday junction (HJ) intermediates during genetic recombination; may have some degree of sequence preference in a mobile junction. Cleaves 4-way DNA junctions introducing paired nicks in opposing strands, leaving a 5'-terminal phosphate and a 3'-terminal hydroxyl group that are subsequently ligated to produce recombinant products. Can cleave all 4 strands 3 bases 3' of the junction center. Cleaves both mobile and immobile junctions. Modifies the structure of the 4-way DNA junction, a model Holliday junction structure. The protein forms multiple complexes with 4-way DNA, suggesting more than 1 homodimer can bind to each junction. This Saccharolobus solfataricus (strain ATCC 35092 / DSM 1617 / JCM 11322 / P2) (Sulfolobus solfataricus) protein is Crossover junction endodeoxyribonuclease Hjc.